We begin with the raw amino-acid sequence, 260 residues long: Intermembrane phospholipid transport system permease protein MlaE (260 aa).

Topologically, residues 1-50 (MLLNALASLGHKGIKTLRTFGRAGLMLFNALVGKPEFRKHAPLLVRQLYN) are cytoplasmic. The chain crosses the membrane as a helical span at residues 51 to 71 (VGVLSMLIIVVSGVFIGMVLG). The Periplasmic segment spans residues 72–88 (LQGYLVLTTYSAETSLG). The chain crosses the membrane as a helical span at residues 89-109 (MLVALSLLRELGPVVAALLFA). Over 110–147 (GRAGSALTAEIGLMRATEQLSSMEMMAVDPLRRVISPR) the chain is Cytoplasmic. The chain crosses the membrane as a helical span at residues 148–168 (FWAGVISLPLLTVIFVAVGIW). Over 169–198 (GGSLVGVSWKGIDSGFFWSAMQNAVDWRMD) the chain is Periplasmic. Residues 199-219 (LVNCLIKSVVFAITVTWISLF) form a helical membrane-spanning segment. The Cytoplasmic segment spans residues 220–238 (NGYDAIPTSAGISRATTRT). The helical transmembrane segment at 239-259 (VVHSSLAVLGLDFVLTALMFG) threads the bilayer. Residue N260 is a topological domain, periplasmic.

The protein belongs to the MlaE permease family. The complex is composed of two ATP-binding proteins (MlaF), two transmembrane proteins (MlaE), two cytoplasmic solute-binding proteins (MlaB) and six periplasmic solute-binding proteins (MlaD).

The protein localises to the cell inner membrane. Its function is as follows. Part of the ABC transporter complex MlaFEDB, which is involved in a phospholipid transport pathway that maintains lipid asymmetry in the outer membrane by retrograde trafficking of phospholipids from the outer membrane to the inner membrane. Probably responsible for the translocation of the substrate across the membrane. The chain is Intermembrane phospholipid transport system permease protein MlaE from Escherichia coli O157:H7.